The primary structure comprises 181 residues: Regulator of G-protein signaling 10 (181 aa).

Positions 1–35 (MFTRAVSRLSRKRPPSDIHDGDGSSSSGHQSLKST) are disordered. Residues Ser24 and Ser41 each carry the phosphoserine modification. Positions 41–156 (SLENLLEDPE…LKSDLFLKHR (116 aa)) constitute an RGS domain. Residue Cys74 is the site of S-palmitoyl cysteine attachment. Residues 157–181 (RTEEEEEDPPDAQTAAKRASRIYNT) form a disordered region. A Phosphoserine modification is found at Ser176.

In terms of assembly, interacts with GNAZ, GNAI1 and GNAI3. Associates specifically with the activated, GTP-bound forms of GNAZ and GNAI3.

It localises to the cytoplasm. It is found in the cytosol. Its subcellular location is the nucleus. In terms of biological role, regulates G protein-coupled receptor signaling cascades, including signaling downstream of the muscarinic acetylcholine receptor CHRM2. Inhibits signal transduction by increasing the GTPase activity of G protein alpha subunits, thereby driving them into their inactive GDP-bound form. Modulates the activity of potassium channels that are activated in response to CHRM2 signaling. Activity on GNAZ is inhibited by palmitoylation of the G-protein. The polypeptide is Regulator of G-protein signaling 10 (Rgs10) (Rattus norvegicus (Rat)).